Here is a 166-residue protein sequence, read N- to C-terminus: Putative transcriptional regulatory protein for hcr operon (166 aa).

The HTH marR-type domain occupies 1-155 (MRKHRGKPAN…LIGLLKRLYR (155 aa)).

Its function is as follows. May be involved in the regulation of genes for 4-hydroxybenzoyl-CoA reductase. The sequence is that of Putative transcriptional regulatory protein for hcr operon from Thauera aromatica.